The chain runs to 524 residues: Lycopene epsilon cyclase, chloroplastic (524 aa).

Residues 1 to 45 constitute a chloroplast transit peptide; that stretch reads MECVGARNFAAMAVSTFPSWSCRRKFPVVKRYSYRNIRFGLCSVR. 111–139 serves as a coordination point for NAD(+); sequence LVVIGCGPAGLALAAESAKLGLKVGLIGP. The next 2 membrane-spanning stretches (helical) occupy residues 441 to 461 and 475 to 495; these read FFLF…RSFF and FLGS…MFVI.

This sequence belongs to the lycopene cyclase family.

Its subcellular location is the plastid. The protein localises to the chloroplast membrane. It catalyses the reaction a carotenoid psi-end group = a carotenoid epsilon-end group. It functions in the pathway carotenoid biosynthesis; alpha-zeacarotene biosynthesis. Its pathway is carotenoid biosynthesis; delta-carotene biosynthesis. Involved in carotenoid biosynthesis. Catalyzes the single epsilon-cyclization reaction which converts lycopene to delta-carotene and neurosporene to alpha-zeacarotene. Required for lutein biosynthesis. This chain is Lycopene epsilon cyclase, chloroplastic, found in Arabidopsis thaliana (Mouse-ear cress).